Consider the following 201-residue polypeptide: Small ribosomal subunit protein uS4c (201 aa).

The tract at residues 20 to 43 is disordered; that stretch reads GLTSKRPRAGSDLRNQSRSGKRSQ. The S4 RNA-binding domain occupies 89-149; that stretch reads MRLDNILFRL…DEQKSRALIQ (61 aa).

Belongs to the universal ribosomal protein uS4 family. In terms of assembly, part of the 30S ribosomal subunit. Contacts protein S5. The interaction surface between S4 and S5 is involved in control of translational fidelity.

It is found in the plastid. The protein resides in the chloroplast. In terms of biological role, one of the primary rRNA binding proteins, it binds directly to 16S rRNA where it nucleates assembly of the body of the 30S subunit. Functionally, with S5 and S12 plays an important role in translational accuracy. The sequence is that of Small ribosomal subunit protein uS4c (rps4) from Buxus microphylla (Littleleaf boxwood).